The sequence spans 412 residues: Na(+)-translocating NADH-quinone reductase subunit B (412 aa).

3 helical membrane-spanning segments follow: residues 57 to 77, 127 to 147, and 163 to 183; these read MILV…NVGL, VFFL…EVLF, and SILF…ALGI. Threonine 236 is subject to FMN phosphoryl threonine. The next 5 membrane-spanning stretches (helical) occupy residues 270 to 290, 297 to 317, 322 to 342, 358 to 378, and 381 to 401; these read GSIG…ILFG, IVAG…VIGS, MFAM…GMMF, WSYG…NPAY, and GMML…YLVV.

It belongs to the NqrB/RnfD family. As to quaternary structure, composed of six subunits; NqrA, NqrB, NqrC, NqrD, NqrE and NqrF. The cofactor is FMN.

It localises to the cell inner membrane. The catalysed reaction is a ubiquinone + n Na(+)(in) + NADH + H(+) = a ubiquinol + n Na(+)(out) + NAD(+). Functionally, NQR complex catalyzes the reduction of ubiquinone-1 to ubiquinol by two successive reactions, coupled with the transport of Na(+) ions from the cytoplasm to the periplasm. NqrA to NqrE are probably involved in the second step, the conversion of ubisemiquinone to ubiquinol. The chain is Na(+)-translocating NADH-quinone reductase subunit B from Klebsiella pneumoniae subsp. pneumoniae (strain ATCC 700721 / MGH 78578).